Reading from the N-terminus, the 190-residue chain is Pyridoxal 5'-phosphate synthase subunit PdxT (190 aa).

46 to 48 is an L-glutamine binding site; that stretch reads GES. C78 acts as the Nucleophile in catalysis. Residues R106 and 135 to 136 contribute to the L-glutamine site; that span reads IR. Catalysis depends on charge relay system residues H171 and E173.

This sequence belongs to the glutaminase PdxT/SNO family. In the presence of PdxS, forms a dodecamer of heterodimers. Only shows activity in the heterodimer.

It carries out the reaction aldehydo-D-ribose 5-phosphate + D-glyceraldehyde 3-phosphate + L-glutamine = pyridoxal 5'-phosphate + L-glutamate + phosphate + 3 H2O + H(+). The enzyme catalyses L-glutamine + H2O = L-glutamate + NH4(+). Its pathway is cofactor biosynthesis; pyridoxal 5'-phosphate biosynthesis. Functionally, catalyzes the hydrolysis of glutamine to glutamate and ammonia as part of the biosynthesis of pyridoxal 5'-phosphate. The resulting ammonia molecule is channeled to the active site of PdxS. The protein is Pyridoxal 5'-phosphate synthase subunit PdxT of Dictyoglomus turgidum (strain DSM 6724 / Z-1310).